Consider the following 150-residue polypeptide: Macrodomain Ter protein (150 aa).

Belongs to the MatP family. As to quaternary structure, homodimer.

It localises to the cytoplasm. In terms of biological role, required for spatial organization of the terminus region of the chromosome (Ter macrodomain) during the cell cycle. Prevents early segregation of duplicated Ter macrodomains during cell division. Binds specifically to matS, which is a 13 bp signature motif repeated within the Ter macrodomain. This Citrobacter koseri (strain ATCC BAA-895 / CDC 4225-83 / SGSC4696) protein is Macrodomain Ter protein.